Reading from the N-terminus, the 828-residue chain is RNA-directed RNA polymerase 2a (828 aa).

The RdRp catalytic domain occupies 515-628 (KFCLEIDLSK…FSIKAPVGDP (114 aa)). The disordered stretch occupies residues 776-828 (SKASRRKAVESNGKHRDPSTRDHSKVGTDESKETSTEETTQTEPQGAGSQKSK). Positions 782-810 (KAVESNGKHRDPSTRDHSKVGTDESKETS) are enriched in basic and acidic residues.

It belongs to the ssRNA positive-strand viruses RNA-directed RNA polymerase family. In terms of assembly, interacts with replication protein 1a.

It carries out the reaction RNA(n) + a ribonucleoside 5'-triphosphate = RNA(n+1) + diphosphate. Functionally, RNA-dependent RNA polymerase which replicates the viral genome composed of 3 RNA segments, RNA1, RNA2 and RNA3. This Canna (Florist's daisy) protein is RNA-directed RNA polymerase 2a.